The following is a 510-amino-acid chain: NAD(P)H-quinone oxidoreductase subunit 2 A, chloroplastic (510 aa).

The next 13 helical transmembrane spans lie at 24–44, 57–77, 99–119, 124–144, 149–169, 183–203, 227–247, 295–315, 323–343, 347–367, 395–415, 418–438, and 484–504; these read LLLFHGSFIFPECILIFGLIL, IPWLYFISSTSLVMSITALLF, IFQFLILLCSTLCIPLSVEYI, MAITEFLLFVLTATLGGMFLC, LITIFVAPECFSLCSYLLSGY, YLLMGGASSSILVHGFSWLYG, PGISIALIFITVGIGFKLSPA, WHLLLEILAILSMILGNLIAI, MLAYSSIGQIGYVIIGIIVGD, GYASMITYMLFYISMNLGTFA, ALSSALCLLSLGGLPPLAGFF, LHLFWCGWQAGLYFLVSIGLL, and MIVCVIASTIPGISMNPIIAI.

The protein belongs to the complex I subunit 2 family. NDH is composed of at least 16 different subunits, 5 of which are encoded in the nucleus.

Its subcellular location is the plastid. It is found in the chloroplast thylakoid membrane. The enzyme catalyses a plastoquinone + NADH + (n+1) H(+)(in) = a plastoquinol + NAD(+) + n H(+)(out). It catalyses the reaction a plastoquinone + NADPH + (n+1) H(+)(in) = a plastoquinol + NADP(+) + n H(+)(out). In terms of biological role, NDH shuttles electrons from NAD(P)H:plastoquinone, via FMN and iron-sulfur (Fe-S) centers, to quinones in the photosynthetic chain and possibly in a chloroplast respiratory chain. The immediate electron acceptor for the enzyme in this species is believed to be plastoquinone. Couples the redox reaction to proton translocation, and thus conserves the redox energy in a proton gradient. This Platanus occidentalis (Sycamore) protein is NAD(P)H-quinone oxidoreductase subunit 2 A, chloroplastic.